The sequence spans 207 residues: Peptidyl-tRNA hydrolase (207 aa).

Y14 serves as a coordination point for tRNA. The active-site Proton acceptor is the H19. TRNA contacts are provided by Y64, N66, and N112.

This sequence belongs to the PTH family. Monomer.

The protein resides in the cytoplasm. The catalysed reaction is an N-acyl-L-alpha-aminoacyl-tRNA + H2O = an N-acyl-L-amino acid + a tRNA + H(+). In terms of biological role, hydrolyzes ribosome-free peptidyl-tRNAs (with 1 or more amino acids incorporated), which drop off the ribosome during protein synthesis, or as a result of ribosome stalling. Functionally, catalyzes the release of premature peptidyl moieties from peptidyl-tRNA molecules trapped in stalled 50S ribosomal subunits, and thus maintains levels of free tRNAs and 50S ribosomes. The polypeptide is Peptidyl-tRNA hydrolase (Rhodopseudomonas palustris (strain HaA2)).